A 321-amino-acid chain; its full sequence is tRNA U34 carboxymethyltransferase (321 aa).

Residues lysine 90, tryptophan 104, lysine 109, glycine 129, 151-153 (DPT), 180-181 (IE), methionine 195, tyrosine 199, and arginine 314 contribute to the carboxy-S-adenosyl-L-methionine site.

The protein belongs to the class I-like SAM-binding methyltransferase superfamily. CmoB family. As to quaternary structure, homotetramer.

The catalysed reaction is carboxy-S-adenosyl-L-methionine + 5-hydroxyuridine(34) in tRNA = 5-carboxymethoxyuridine(34) in tRNA + S-adenosyl-L-homocysteine + H(+). Functionally, catalyzes carboxymethyl transfer from carboxy-S-adenosyl-L-methionine (Cx-SAM) to 5-hydroxyuridine (ho5U) to form 5-carboxymethoxyuridine (cmo5U) at position 34 in tRNAs. This is tRNA U34 carboxymethyltransferase from Haemophilus influenzae (strain PittEE).